We begin with the raw amino-acid sequence, 507 residues long: ATP synthase subunit alpha, chloroplastic (507 aa).

170 to 177 (GDRQTGKT) is an ATP binding site.

Belongs to the ATPase alpha/beta chains family. In terms of assembly, F-type ATPases have 2 components, CF(1) - the catalytic core - and CF(0) - the membrane proton channel. CF(1) has five subunits: alpha(3), beta(3), gamma(1), delta(1), epsilon(1). CF(0) has four main subunits: a, b, b' and c.

The protein resides in the plastid. It localises to the chloroplast thylakoid membrane. The catalysed reaction is ATP + H2O + 4 H(+)(in) = ADP + phosphate + 5 H(+)(out). In terms of biological role, produces ATP from ADP in the presence of a proton gradient across the membrane. The alpha chain is a regulatory subunit. This Ipomoea purpurea (Common morning glory) protein is ATP synthase subunit alpha, chloroplastic.